The sequence spans 878 residues: Pyruvate dehydrogenase phosphatase regulatory subunit, mitochondrial (878 aa).

The N-terminal 93 residues, 1-93, are a transit peptide targeting the mitochondrion; it reads MLYRLLSIVQ…CAGILSTARH (93 aa).

The protein belongs to the GcvT family. In terms of assembly, heterodimer of a catalytic (PDP1) and a regulatory (PDPR) subunit.

The protein localises to the mitochondrion matrix. Its function is as follows. Decreases the sensitivity of PDP1 to magnesium ions, and this inhibition is reversed by the polyamine spermine. This is Pyruvate dehydrogenase phosphatase regulatory subunit, mitochondrial (Pdpr) from Mus musculus (Mouse).